A 239-amino-acid chain; its full sequence is Sugar fermentation stimulation protein homolog (239 aa).

The protein belongs to the SfsA family.

This is Sugar fermentation stimulation protein homolog from Alcanivorax borkumensis (strain ATCC 700651 / DSM 11573 / NCIMB 13689 / SK2).